The following is a 127-amino-acid chain: Thioredoxin domain-containing protein 8 (127 aa).

Residues 1–92 (MVQIIKDTNE…SQKVTLFSRI (92 aa)) enclose the Thioredoxin domain. An intrachain disulfide couples Cys-32 to Cys-35.

It belongs to the thioredoxin family. In terms of tissue distribution, testis-specific. Only expressed during spermiogenesis, prominently in the Golgi apparatus of pachytene spermatocytes and round and elongated spermatids, with a transient localization in the developing acrosome of round spermatids (at protein level).

The protein resides in the cytoplasm. It localises to the golgi apparatus. Functionally, may be required for post-translational modifications of proteins required for acrosomal biogenesis. May act by reducing disulfide bonds within the sperm. This chain is Thioredoxin domain-containing protein 8 (TXNDC8), found in Homo sapiens (Human).